The following is a 438-amino-acid chain: Xylose isomerase (438 aa).

Residues histidine 100 and aspartate 103 contribute to the active site. Mg(2+) contacts are provided by glutamate 231, glutamate 267, histidine 270, aspartate 295, aspartate 306, aspartate 308, and aspartate 338.

This sequence belongs to the xylose isomerase family. As to quaternary structure, homotetramer. Requires Mg(2+) as cofactor.

Its subcellular location is the cytoplasm. The catalysed reaction is alpha-D-xylose = alpha-D-xylulofuranose. This is Xylose isomerase from Pseudomonas syringae pv. syringae (strain B728a).